The sequence spans 135 residues: Lysozyme 2 (135 aa).

A signal peptide spans 1–18; that stretch reads MNFLILFCVVASASVVYS. The I-type lysozyme domain occupies 19–135; that stretch reads SISDQCLRCI…WRLVQAKGCS (117 aa). Intrachain disulfides connect cysteine 24-cysteine 100, cysteine 29-cysteine 35, cysteine 40-cysteine 49, cysteine 62-cysteine 82, cysteine 72-cysteine 78, and cysteine 96-cysteine 114. Residue glutamate 32 is the Proton donor of the active site. Aspartate 43 acts as the Nucleophile in catalysis. Substrate is bound at residue 55 to 61; the sequence is KQGYWTD. Substrate contacts are provided by residues tyrosine 86 and 107-109; that span reads HNG.

As to expression, expressed in the epithelia of the basophil cells in the digestive tubules, but not in the epithelial cells lining the digestive ducts and stomach. Expressed at a much lower level in the style sac-midgut tissues. No expression detected in mantle, gills, labial palps or hemocytes.

The protein localises to the secreted. It catalyses the reaction Hydrolysis of (1-&gt;4)-beta-linkages between N-acetylmuramic acid and N-acetyl-D-glucosamine residues in a peptidoglycan and between N-acetyl-D-glucosamine residues in chitodextrins.. Activity decreased by 80% by addition of 0.01 M calcium, zinc or magnesium. Activity only decreased by 17% by addition of ammonium, and by 2% by addition of sodium. Functionally, the main role of this lysozyme is in digestion. Has antibacterial activity against the Gram-positive bacterium P.cerevisiae and the Gram-negative bacteria E.coli and V.vulnificus. Shows some chitinase activity but no isopeptidase activity. This chain is Lysozyme 2, found in Crassostrea virginica (Eastern oyster).